The primary structure comprises 440 residues: GTPase Der (440 aa).

EngA-type G domains lie at 4-169 and 178-353; these read PVVA…PEED and IKVA…DQAA. Residues 10–17, 57–61, 120–123, 184–191, 231–235, and 296–299 contribute to the GTP site; these read GRPNVGKS, DTGGI, NKVD, GKPNVGKS, DTAGI, and NKWD. In terms of domain architecture, KH-like spans 354-438; the sequence is MRISTGVLND…PIKFILREKE (85 aa).

It belongs to the TRAFAC class TrmE-Era-EngA-EngB-Septin-like GTPase superfamily. EngA (Der) GTPase family. As to quaternary structure, associates with the 50S ribosomal subunit.

Its function is as follows. GTPase that plays an essential role in the late steps of ribosome biogenesis. This Acetivibrio thermocellus (strain ATCC 27405 / DSM 1237 / JCM 9322 / NBRC 103400 / NCIMB 10682 / NRRL B-4536 / VPI 7372) (Clostridium thermocellum) protein is GTPase Der.